Consider the following 306-residue polypeptide: MKRKYLKLMIGLALAATLTLSGCSLPGLSAAADQTIKIGAQSMSESEIIASMLGQLIEHHTDLKTTTIKNLGSNAVQQQALMNGEIDIAATRYTGDALTGTLRMEPEKDPDKALALTQREFKKRYDLKWYDSYGFDNTYAFTVSKELADQYHLETVSDVKKWAPQLKLGVDNYWMKLKGNGYQDFTKTYGMTFGGTYPMQIGLVYDAVKSGKMDIVLAYSTDGRIKSYGLKMLKDDKQFFPPYDCSPVVPEKVLKEHPELEGIIKKMLGKIDTATMQELNYEVDGNLKEPSVVAKEYLEKHRYFES.

The first 22 residues, 1-22 (MKRKYLKLMIGLALAATLTLSG), serve as a signal peptide directing secretion. C23 carries N-palmitoyl cysteine lipidation. The S-diacylglycerol cysteine moiety is linked to residue C23.

This sequence belongs to the OsmX family.

It is found in the cell membrane. Member of a high affinity multicomponent binding-protein-dependent transport system for choline. The chain is Choline-binding protein (opuBC) from Bacillus subtilis (strain 168).